The following is a 610-amino-acid chain: Glutamine--fructose-6-phosphate aminotransferase [isomerizing] (610 aa).

Cys-2 serves as the catalytic Nucleophile; for GATase activity. The region spanning 2–221 (CGIVGAVAQR…DGDVVDLQLA (220 aa)) is the Glutamine amidotransferase type-2 domain. SIS domains follow at residues 286–426 (AYKV…TRGR) and 459–600 (WADR…VDKP). Lys-605 acts as the For Fru-6P isomerization activity in catalysis.

In terms of assembly, homodimer.

The protein resides in the cytoplasm. The enzyme catalyses D-fructose 6-phosphate + L-glutamine = D-glucosamine 6-phosphate + L-glutamate. Functionally, catalyzes the first step in hexosamine metabolism, converting fructose-6P into glucosamine-6P using glutamine as a nitrogen source. This chain is Glutamine--fructose-6-phosphate aminotransferase [isomerizing], found in Bordetella bronchiseptica (strain ATCC BAA-588 / NCTC 13252 / RB50) (Alcaligenes bronchisepticus).